The primary structure comprises 152 residues: uncharacterized protein (152 aa).

Transmembrane regions (helical) follow at residues 2–22 (ENLI…LSFL), 26–46 (FITF…HLIE), 92–112 (VVPI…FILL), and 128–148 (YIIT…YFLK).

The protein localises to the membrane. This is an uncharacterized protein from Acanthamoeba polyphaga mimivirus (APMV).